A 201-amino-acid polypeptide reads, in one-letter code: Recombination protein RecR (201 aa).

The C4-type zinc finger occupies 60 to 75 (CSCCGNVDTIDPCTVC). The Toprim domain occupies 83–178 (AVIIVVEDVA…RITRLAHGVP (96 aa)).

It belongs to the RecR family.

Its function is as follows. May play a role in DNA repair. It seems to be involved in an RecBC-independent recombinational process of DNA repair. It may act with RecF and RecO. The protein is Recombination protein RecR of Rhizobium meliloti (strain 1021) (Ensifer meliloti).